Reading from the N-terminus, the 755-residue chain is Lysosome membrane protein 2-B (755 aa).

Over 1–6 (MKHIGR) the chain is Cytoplasmic. The helical transmembrane segment at 7–27 (IVSFPIGLVLIAVGIIIFVVV) threads the bilayer. N-linked (GlcNAc...) asparagine glycosylation is found at N28, N76, N379, N465, N497, N588, N607, and N680. Residues 28-727 (NRTIKDEFKK…AYKVDSFRYA (700 aa)) lie on the Lumenal side of the membrane. The helical transmembrane segment at 728-748 (ITVILIVVGGFLSLISGGLFV) threads the bilayer. Residues 749-755 (LDKIIDL) lie on the Cytoplasmic side of the membrane. A Di-leucine motif motif is present at residues 752-753 (II).

The protein belongs to the CD36 family. Heavily glycosylated.

It localises to the lysosome membrane. May act as a lysosomal receptor. May be involved in macropinocytosis and fluid phase exocytosis. This is Lysosome membrane protein 2-B (lmpB) from Dictyostelium discoideum (Social amoeba).